The chain runs to 310 residues: Olfactory receptor 4C11 (310 aa).

Topologically, residues 1–23 (MQQNNSVPEFILLGLTQDPLRQK) are extracellular. N4 is a glycosylation site (N-linked (GlcNAc...) asparagine). The helical transmembrane segment at 24–47 (IVFVIFLIFYMGTVVGNMLIIVTI) threads the bilayer. Residues 48 to 55 (KSSRTLGS) are Cytoplasmic-facing. Residues 56 to 77 (PMYFFLFYLSFADSCFSTSTAP) form a helical membrane-spanning segment. Residues 78–98 (RLIVDALSEKKIITYNECMTQ) are Extracellular-facing. Cysteines 95 and 187 form a disulfide. A helical membrane pass occupies residues 99-118 (VFALHLFGCMEIFVLILMAV). Topologically, residues 119–137 (DRYVAICKPLRYPTIMSQQ) are cytoplasmic. Residues 138–156 (VCIILIVLAWIGSLIHSTA) traverse the membrane as a helical segment. At 157 to 193 (QIILALRLPFCGPYLIDHYCCDLQPLLKLACMDTYMI) the chain is on the extracellular side. Residues 194-217 (NLLLVSNSGAICSSSFMILIISYI) traverse the membrane as a helical segment. Topologically, residues 218 to 233 (VILHSLRNHSAKGKKK) are cytoplasmic. The chain crosses the membrane as a helical span at residues 234–256 (ALSACTSHIIVVILFFGPCIFIY). The Extracellular segment spans residues 257-267 (TRPPTTFPMDK). The helical transmembrane segment at 268-287 (MVAVFYTIGTPFLNPLIYTL) threads the bilayer. Topologically, residues 288–310 (RNAEVKNAMRKLWHGKIISENKG) are cytoplasmic.

The protein belongs to the G-protein coupled receptor 1 family.

Its subcellular location is the cell membrane. Functionally, odorant receptor. In Homo sapiens (Human), this protein is Olfactory receptor 4C11 (OR4C11).